A 256-amino-acid polypeptide reads, in one-letter code: tRNA pseudouridine synthase A (256 aa).

Asp-43 acts as the Nucleophile in catalysis. Tyr-94 contributes to the substrate binding site.

This sequence belongs to the tRNA pseudouridine synthase TruA family.

The enzyme catalyses uridine(38/39/40) in tRNA = pseudouridine(38/39/40) in tRNA. In terms of biological role, formation of pseudouridine at positions 38, 39 and 40 in the anticodon stem and loop of transfer RNAs. The sequence is that of tRNA pseudouridine synthase A from Pyrobaculum aerophilum (strain ATCC 51768 / DSM 7523 / JCM 9630 / CIP 104966 / NBRC 100827 / IM2).